A 422-amino-acid chain; its full sequence is UDP-N-acetylglucosamine 1-carboxyvinyltransferase (422 aa).

22-23 (KN) contacts phosphoenolpyruvate. Arg-92 contacts UDP-N-acetyl-alpha-D-glucosamine. Cys-116 (proton donor) is an active-site residue. Cys-116 bears the 2-(S-cysteinyl)pyruvic acid O-phosphothioketal mark. Residues 121 to 125 (RPVDQ), Asp-307, and Ile-329 contribute to the UDP-N-acetyl-alpha-D-glucosamine site.

Belongs to the EPSP synthase family. MurA subfamily.

Its subcellular location is the cytoplasm. It carries out the reaction phosphoenolpyruvate + UDP-N-acetyl-alpha-D-glucosamine = UDP-N-acetyl-3-O-(1-carboxyvinyl)-alpha-D-glucosamine + phosphate. Its pathway is cell wall biogenesis; peptidoglycan biosynthesis. Its function is as follows. Cell wall formation. Adds enolpyruvyl to UDP-N-acetylglucosamine. The sequence is that of UDP-N-acetylglucosamine 1-carboxyvinyltransferase from Psychrobacter arcticus (strain DSM 17307 / VKM B-2377 / 273-4).